A 75-amino-acid chain; its full sequence is Protease B inhibitor 2 (75 aa).

T74 carries the post-translational modification Phosphothreonine.

The protein belongs to the protease inhibitor I9 family. In terms of assembly, part of the heterodimeric LMA1 complex together with the thioredoxin II/TRX2. LMA1 binds to the ATPase SEC18.

Its subcellular location is the cytoplasm. Functionally, cytosolic inhibitor of vacuolar proteinase B (yscB), probably regulating protease B activity during limited proteolysis. PBI2 is a component of the LMA1 complex, which is involved in the facilitation of vesicle fusion such as homotypic vacuole and ER-derived COPII vesicle fusion with the Golgi. The polypeptide is Protease B inhibitor 2 (PBI2) (Saccharomyces cerevisiae (strain ATCC 204508 / S288c) (Baker's yeast)).